The following is a 721-amino-acid chain: Exo beta-1,2-glucooligosaccharide sophorohydrolase (non-reducing end) (721 aa).

The first 18 residues, 1-18, serve as a signal peptide directing secretion; sequence MKHIALLTTLLLSASLQA. A Glycoamylase-like domain is found at 474–708; sequence NHKLIGWNET…LLWNLFMSHP (235 aa).

As to quaternary structure, monomer.

The protein resides in the periplasm. The catalysed reaction is [(1-&gt;2)-beta-D-glucosyl](n) + H2O = [(1-&gt;2)-beta-D-glucosyl](n-2) + sophorose. In terms of biological role, catalyzes the hydrolysis of linear beta-1,2-glucan and beta-1,2-glucooligosaccharides with degrees of polymerization (DPs) greater than or equal to 4, to produce sophorose. The best substrates are tetra- and pentasaccharides. Acts as an exo-type enzyme that releases sophorose from the non-reducing end of the substrate. It cannot hydrolyze cyclic beta-1,2-glucans. This is Exo beta-1,2-glucooligosaccharide sophorohydrolase (non-reducing end) from Parabacteroides distasonis (strain ATCC 8503 / DSM 20701 / CIP 104284 / JCM 5825 / NCTC 11152).